The chain runs to 332 residues: Ectoine dioxygenase (332 aa).

Positions 1-10 are enriched in polar residues; sequence MSVQTSSNRP. A disordered region spans residues 1–47; it reads MSVQTSSNRPLPQANLHIATETPEADSRIRSAPRPGQDPYPTRLSEP. Gln163 contributes to the L-ectoine binding site. Lys169 provides a ligand contact to 2-oxoglutarate. Fe cation contacts are provided by His180, Asp182, and His281.

It belongs to the PhyH family. EctD subfamily. Homodimer. It depends on Fe(2+) as a cofactor.

The catalysed reaction is L-ectoine + 2-oxoglutarate + O2 = 5-hydroxyectoine + succinate + CO2. Functionally, involved in the biosynthesis of 5-hydroxyectoine, called compatible solute, which helps organisms to survive extreme osmotic stress by acting as a highly soluble organic osmolyte. Catalyzes the 2-oxoglutarate-dependent selective hydroxylation of L-ectoine to yield (4S,5S)-5-hydroxyectoine. The sequence is that of Ectoine dioxygenase from Halomonas elongata (strain ATCC 33173 / DSM 2581 / NBRC 15536 / NCIMB 2198 / 1H9).